The primary structure comprises 515 residues: Fatty acyl-CoA reductase 2 (515 aa).

Topologically, residues 1-464 (MSTIAAFYGG…KAKQRLKRLR (464 aa)) are cytoplasmic. Residues 465–484 (NIHYLFNTALFLIAWRLLIA) form a helical membrane-spanning segment. The Peroxisomal portion of the chain corresponds to 485 to 515 (RSQMARNVWFFIVSFCYKFLSYFRASSTLKV).

This sequence belongs to the fatty acyl-CoA reductase family.

Its subcellular location is the peroxisome membrane. The catalysed reaction is a long-chain fatty acyl-CoA + 2 NADPH + 2 H(+) = a long-chain primary fatty alcohol + 2 NADP(+) + CoA. It carries out the reaction a very long-chain fatty acyl-CoA + 2 NADPH + 2 H(+) = a very long-chain primary fatty alcohol + 2 NADP(+) + CoA. It catalyses the reaction an ultra-long-chain fatty acyl-CoA + 2 NADPH + 2 H(+) = an ultra long-chain primary fatty alcohol + 2 NADP(+) + CoA. The enzyme catalyses hexadecanoyl-CoA + 2 NADPH + 2 H(+) = hexadecan-1-ol + 2 NADP(+) + CoA. The catalysed reaction is octadecanoyl-CoA + 2 NADPH + 2 H(+) = octadecan-1-ol + 2 NADP(+) + CoA. It carries out the reaction eicosanoyl-CoA + 2 NADPH + 2 H(+) = eicosan-1-ol + 2 NADP(+) + CoA. It catalyses the reaction docosanoyl-CoA + 2 NADPH + 2 H(+) = docosan-1-ol + 2 NADP(+) + CoA. The enzyme catalyses tetracosanoyl-CoA + 2 NADPH + 2 H(+) = tetracosan-1-ol + 2 NADP(+) + CoA. The catalysed reaction is hexacosanoyl-CoA + 2 NADPH + 2 H(+) = hexacosan-1-ol + 2 NADP(+) + CoA. It carries out the reaction octacosanoyl-CoA + 2 NADPH + 2 H(+) = octacosan-1-ol + 2 NADP(+) + CoA. It catalyses the reaction triacontanoyl-CoA + 2 NADPH + 2 H(+) = triacontan-1-ol + 2 NADP(+) + CoA. The enzyme catalyses 18-methylnonadecanoyl-CoA + 2 NADPH + 2 H(+) = 18-methylnonadecan-1-ol + 2 NADP(+) + CoA. The catalysed reaction is 20-methylheneicosanoyl-CoA + 2 NADPH + 2 H(+) = 20-methylheneicosan-1-ol + 2 NADP(+) + CoA. It carries out the reaction 22-methyltricosanoyl-CoA + 2 NADPH + 2 H(+) = 22-methyltricosan-1-ol + 2 NADP(+) + CoA. It catalyses the reaction 24-methylpentacosanoyl-CoA + 2 NADPH + 2 H(+) = 24-methylpentacosan-1-ol + 2 NADP(+) + CoA. Catalyzes the reduction of saturated but not unsaturated C16 or C18 fatty acyl-CoA to fatty alcohols (FAls). A lower activity can be observed with shorter fatty acyl-CoA substrates. Can produce very long-chain and ultra long-chain FAls, regardless of whether they have a straight or branched chain. Involved in the production of ether lipids/plasmalogens and wax monoesters whose synthesis requires FAls as substrates. The protein is Fatty acyl-CoA reductase 2 of Homo sapiens (Human).